Here is a 29-residue protein sequence, read N- to C-terminus: Cytochrome b6-f complex subunit 8 (29 aa).

The helical transmembrane segment at 3 to 23 (TVSLAWAALMVVFTFSLSLVV) threads the bilayer.

Belongs to the PetN family. In terms of assembly, the 4 large subunits of the cytochrome b6-f complex are cytochrome b6, subunit IV (17 kDa polypeptide, PetD), cytochrome f and the Rieske protein, while the 4 small subunits are PetG, PetL, PetM and PetN. The complex functions as a dimer.

It localises to the plastid. It is found in the chloroplast thylakoid membrane. Its function is as follows. Component of the cytochrome b6-f complex, which mediates electron transfer between photosystem II (PSII) and photosystem I (PSI), cyclic electron flow around PSI, and state transitions. This chain is Cytochrome b6-f complex subunit 8, found in Chloranthus spicatus (Chulantree).